The sequence spans 906 residues: Cadherin-2 (906 aa).

The N-terminal stretch at 1 to 25 (MCRIAGALRTLLPLLAALLQASVEA) is a signal peptide. Residues 26-159 (SGEIALCKTG…HSGHLQRQKR (134 aa)) constitute a propeptide that is removed on maturation. Phosphoserine; by FAM20C is present on residues Ser96 and Ser135. 5 consecutive Cadherin domains span residues 160–267 (DWVI…RPEF), 268–382 (LHQV…PPEF), 383–497 (TAMT…NPYF), 498–603 (APNP…DNAP), and 604–714 (QVLP…DVDR). The Extracellular portion of the chain corresponds to 160–724 (DWVIPPINLP…IVGAGLGTGA (565 aa)). Glu170 lines the Ca(2+) pocket. Residue Asn190 is glycosylated (N-linked (GlcNAc...) asparagine). Residues Asp226, Glu228, Asp259, Met260, Asn261, Asp262, and Asn263 each contribute to the Ca(2+) site. N-linked (GlcNAc...) asparagine glycosylation occurs at Asn273. Ca(2+)-binding residues include Asp293, Asp295, and Asn301. An N-linked (GlcNAc...) asparagine glycan is attached at Asn325. Asp353 lines the Ca(2+) pocket. 4 N-linked (GlcNAc...) asparagine glycosylation sites follow: Asn402, Asn572, Asn651, and Asn692. The chain crosses the membrane as a helical span at residues 725-745 (IIAILLCIIILLILVLMFVVW). At 746 to 906 (MKRRDKERQA…LADMYGGGDD (161 aa)) the chain is on the cytoplasmic side. Positions 863–880 (SGSTAGSLSSLNSSSSGG) are enriched in low complexity. The disordered stretch occupies residues 863 to 884 (SGSTAGSLSSLNSSSSGGEQDY).

In terms of assembly, homodimer (via extracellular region). Can also form heterodimers with other cadherins (via extracellular region). Dimerization occurs in trans, i.e. with a cadherin chain from another cell. Interacts with CDCP1. Interacts with PCDH8; this complex may also include TAOK2. The interaction with PCDH8 may lead to internalization through TAOK2/p38 MAPK pathway. Identified in a complex containing FGFR4, NCAM1, CDH2, PLCG1, FRS2, SRC, SHC1, GAP43 and CTTN. May interact with OBSCN (via protein kinase domain 2). Interacts with FBXO45. In terms of processing, cleaved by MMP24. Ectodomain cleavage leads to the generation of a soluble 90 kDa N-terminal soluble fragment and a 45 kDa membrane-bound C-terminal fragment 1 (CTF1), which is further cleaved by gamma-secretase into a 35 kDa. Cleavage in neural stem cells by MMP24 affects CDH2-mediated anchorage of neural stem cells to ependymocytes in the adult subependymal zone, leading to modulate neural stem cell quiescence. May be phosphorylated by OBSCN.

It localises to the cell membrane. It is found in the sarcolemma. The protein resides in the cell junction. The protein localises to the cell surface. Its subcellular location is the desmosome. It localises to the adherens junction. In terms of biological role, calcium-dependent cell adhesion protein; preferentially mediates homotypic cell-cell adhesion by dimerization with a CDH2 chain from another cell. Cadherins may thus contribute to the sorting of heterogeneous cell types. Acts as a regulator of neural stem cells quiescence by mediating anchorage of neural stem cells to ependymocytes in the adult subependymal zone: upon cleavage by MMP24, CDH2-mediated anchorage is affected, leading to modulate neural stem cell quiescence. Plays a role in cell-to-cell junction formation between pancreatic beta cells and neural crest stem (NCS) cells, promoting the formation of processes by NCS cells. Required for proper neurite branching. Required for pre- and postsynaptic organization. CDH2 may be involved in neuronal recognition mechanism. In hippocampal neurons, may regulate dendritic spine density. The protein is Cadherin-2 (CDH2) of Homo sapiens (Human).